The primary structure comprises 930 residues: Pyruvate dehydrogenase E1 component (930 aa).

A compositionally biased stretch (basic and acidic residues) spans 1 to 10; it reads MTTDFARHDL. The disordered stretch occupies residues 1–21; sequence MTTDFARHDLAQNSNSASEPD. Residue Lys375 forms an Isoglutamyl lysine isopeptide (Lys-Gln) (interchain with Q-Cter in protein Pup) linkage.

Homodimer. Part of the PDH complex, consisting of multiple copies of AceE (E1), DlaT (E2) and Lpd (E3). Mg(2+) is required as a cofactor. It depends on thiamine diphosphate as a cofactor.

It carries out the reaction N(6)-[(R)-lipoyl]-L-lysyl-[protein] + pyruvate + H(+) = N(6)-[(R)-S(8)-acetyldihydrolipoyl]-L-lysyl-[protein] + CO2. Functionally, component of the pyruvate dehydrogenase (PDH) complex, that catalyzes the overall conversion of pyruvate to acetyl-CoA and CO(2). AceE has reductase activity with pyruvate but does not react with 2-oxoglutarate. The polypeptide is Pyruvate dehydrogenase E1 component (aceE) (Mycobacterium tuberculosis (strain ATCC 25618 / H37Rv)).